Reading from the N-terminus, the 194-residue chain is 7-methyl-GTP pyrophosphatase (194 aa).

Catalysis depends on aspartate 67, which acts as the Proton acceptor.

It belongs to the Maf family. YceF subfamily. A divalent metal cation serves as cofactor.

The protein localises to the cytoplasm. The catalysed reaction is N(7)-methyl-GTP + H2O = N(7)-methyl-GMP + diphosphate + H(+). Nucleoside triphosphate pyrophosphatase that hydrolyzes 7-methyl-GTP (m(7)GTP). May have a dual role in cell division arrest and in preventing the incorporation of modified nucleotides into cellular nucleic acids. The polypeptide is 7-methyl-GTP pyrophosphatase (Pseudoalteromonas atlantica (strain T6c / ATCC BAA-1087)).